The following is a 251-amino-acid chain: 5'-nucleotidase SurE (251 aa).

A divalent metal cation is bound by residues Asp8, Asp9, Ser40, and Asn95.

This sequence belongs to the SurE nucleotidase family. A divalent metal cation is required as a cofactor.

It localises to the cytoplasm. The enzyme catalyses a ribonucleoside 5'-phosphate + H2O = a ribonucleoside + phosphate. Its function is as follows. Nucleotidase that shows phosphatase activity on nucleoside 5'-monophosphates. This chain is 5'-nucleotidase SurE, found in Desulfitobacterium hafniense (strain DSM 10664 / DCB-2).